Consider the following 294-residue polypeptide: UPF0718 protein YcgR (294 aa).

8 helical membrane-spanning segments follow: residues 15–35 (ISILIEAIPFILIGVILSGII), 54–74 (LAVLFGALAGVLFPACECGII), 92–112 (AFMLTAPIINPIVLFSTYIAF), 117–137 (SVVFYRGGLALAVSLIIGVIL), 174–194 (IDEFFSVGKYLIIGAFIAAAM), 215–235 (LVMMGLAFVLSLCSEVDAFIA), 247–267 (LIAFLVFGAMVDIKNLLMMLA), and 273–293 (FVFLLITYIVVIVLAGSLLVK).

Belongs to the UPF0718 family.

It is found in the cell membrane. The polypeptide is UPF0718 protein YcgR (ycgR) (Bacillus subtilis (strain 168)).